The chain runs to 144 residues: Large ribosomal subunit protein uL13 (144 aa).

The protein belongs to the universal ribosomal protein uL13 family. In terms of assembly, part of the 50S ribosomal subunit.

Functionally, this protein is one of the early assembly proteins of the 50S ribosomal subunit, although it is not seen to bind rRNA by itself. It is important during the early stages of 50S assembly. The protein is Large ribosomal subunit protein uL13 of Chloroflexus aurantiacus (strain ATCC 29366 / DSM 635 / J-10-fl).